We begin with the raw amino-acid sequence, 110 residues long: uncharacterized protein (110 aa).

To M.jannaschii MJ1213 and A.aeolicus AA15.

This is an uncharacterized protein from Methanocaldococcus jannaschii (strain ATCC 43067 / DSM 2661 / JAL-1 / JCM 10045 / NBRC 100440) (Methanococcus jannaschii).